Consider the following 243-residue polypeptide: Small ribosomal subunit protein uS3 (243 aa).

Residues 38–106 (IRKYLNARLA…DIQINIFEVK (69 aa)) form the KH type-2 domain. Residues 217 to 243 (TQTKESGRGGNGNNNGGKNFKRKKNNR) are disordered.

Belongs to the universal ribosomal protein uS3 family. Part of the 30S ribosomal subunit. Forms a tight complex with proteins S10 and S14.

Its function is as follows. Binds the lower part of the 30S subunit head. Binds mRNA in the 70S ribosome, positioning it for translation. This is Small ribosomal subunit protein uS3 from Phocaeicola vulgatus (strain ATCC 8482 / DSM 1447 / JCM 5826 / CCUG 4940 / NBRC 14291 / NCTC 11154) (Bacteroides vulgatus).